Consider the following 257-residue polypeptide: Adenylate kinase (257 aa).

52 to 57 (GAGKGT) contributes to the ATP binding site. The interval 72–101 (ATGDMLRSQVAKKTELGKEAKKIMDQGGLV) is NMP. AMP-binding positions include T73, R78, 99–101 (GLV), 128–131 (GFPR), and Q135. Residues 169–206 (GRLVHPASGRSYHKIFNPPKNDMKDDVTGEPLIQRSDD) are LID. Residues R170 and 179-180 (SY) each bind ATP. AMP is bound by residues R203 and R214. An ATP-binding site is contributed by Q242.

It belongs to the adenylate kinase family. AK2 subfamily. Monomer.

It localises to the cytoplasm. The protein resides in the cytosol. Its subcellular location is the mitochondrion intermembrane space. It carries out the reaction AMP + ATP = 2 ADP. Catalyzes the reversible transfer of the terminal phosphate group between ATP and AMP. Plays an important role in cellular energy homeostasis and in adenine nucleotide metabolism. Adenylate kinase activity is critical for regulation of the phosphate utilization and the AMP de novo biosynthesis pathways. This is Adenylate kinase (adk1) from Neosartorya fischeri (strain ATCC 1020 / DSM 3700 / CBS 544.65 / FGSC A1164 / JCM 1740 / NRRL 181 / WB 181) (Aspergillus fischerianus).